The sequence spans 300 residues: Tyrosine recombinase XerD (300 aa).

One can recognise a Core-binding (CB) domain in the interval 5-90 (YQCDPLIDAF…SLRRFYNYLL (86 aa)). One can recognise a Tyr recombinase domain in the interval 111 to 294 (HLPDSLSESQ…ARARLQELHQ (184 aa)). Residues Arg-151, Lys-175, His-246, Arg-249, and His-272 contribute to the active site. Tyr-281 (O-(3'-phospho-DNA)-tyrosine intermediate) is an active-site residue.

The protein belongs to the 'phage' integrase family. XerD subfamily. In terms of assembly, forms a cyclic heterotetrameric complex composed of two molecules of XerC and two molecules of XerD.

It localises to the cytoplasm. Its function is as follows. Site-specific tyrosine recombinase, which acts by catalyzing the cutting and rejoining of the recombining DNA molecules. The XerC-XerD complex is essential to convert dimers of the bacterial chromosome into monomers to permit their segregation at cell division. It also contributes to the segregational stability of plasmids. The protein is Tyrosine recombinase XerD of Shewanella oneidensis (strain ATCC 700550 / JCM 31522 / CIP 106686 / LMG 19005 / NCIMB 14063 / MR-1).